A 339-amino-acid polypeptide reads, in one-letter code: MHIKRSIEKIPGGMMLVPLFLGALCHTFAPGAGKYFGSFTNGLISGTVPILAVWFFCMGASIRLSATGTVLRKSGTLVVTKIAVAWVVAAVASRILPENGVEVGFFAGLSTLALVAAMDMTNGGLYASIMQQYGTKEESGAFVLMSLESGPLMTMVILGTAGIASFEPHVFVGAVLPFLVGFALGNLDPELRDFFSRAVQTLIPFFAFALGNTIDLSVIGQTGLLGVLLGISVIIITGIPLIVADKVLGGGDGTAGIAASSSAGAAVATPVLIAEMVPAFKPVAPAATTLVATSVIVTSVLVPIITAMWSKRVKGGDGTVPKEDAVEEKAEQQRRRIIK.

Helical transmembrane passes span 10–30, 42–62, 77–97, 100–120, 141–161, 163–183, 199–219, 224–244, 254–274, and 289–309; these read IPGG…TFAP, GLIS…GASI, LVVT…RILP, GVEV…AMDM, AFVL…LGTA, IASF…VGFA, VQTL…LSVI, LLGV…LIVA, TAGI…VLIA, and TLVA…TAMW. The interval 315–339 is disordered; it reads GGDGTVPKEDAVEEKAEQQRRRIIK. Residues 320-339 are compositionally biased toward basic and acidic residues; it reads VPKEDAVEEKAEQQRRRIIK.

It belongs to the KdgT transporter family.

The protein localises to the cell inner membrane. It catalyses the reaction 2-dehydro-3-deoxy-D-gluconate(in) + H(+)(in) = 2-dehydro-3-deoxy-D-gluconate(out) + H(+)(out). Its activity is regulated as follows. Uptake is inhibited by the protonophore uncouplers carbonyl cyanide m-chlorophenylhydrazone (CCCP) and 2,4-dinitrophenol, and by NaN(3). Its function is as follows. Catalyzes the proton-dependent uptake of 2-keto-3-deoxygluconate (KDG) into the cell. Can also mediate the uptake of glucuronate with a low affinity, and may mediate the uptake of 5-keto-4-deoxyuronate (DKI) and 2,5-diketo-3-deoxygluconate (DKII), which are intermediates in pectin degradation. This chain is 2-keto-3-deoxygluconate permease, found in Dickeya chrysanthemi (Pectobacterium chrysanthemi).